Reading from the N-terminus, the 167-residue chain is MFISMWAQDKNGLIGKDGLLPWRLPNDMRFFREHTMDKILVMGRKTYEGMGKLSLPYRHIIVLTTQKDFKVEKNAEVLHSIDELLAYAKDIPEDIYVSGGSRIFQALLPETKIIWRTLIDAEFEGDTFIGEIDFTSFELVEEHEGIVNQENQYPHRFQKWQKMSKVV.

In terms of domain architecture, DHFR spans 1-162 (MFISMWAQDK…YPHRFQKWQK (162 aa)). Residues Ala-7 and 13 to 19 (LIGKDGL) each bind NADP(+). A substrate-binding site is contributed by Asp-27. 45–46 (KT) is an NADP(+) binding site. Arg-58 contacts substrate. Residues 64–65 (TT) and 99–106 (GGSRIFQA) each bind NADP(+). Thr-117 is a substrate binding site.

It belongs to the dihydrofolate reductase family.

The catalysed reaction is (6S)-5,6,7,8-tetrahydrofolate + NADP(+) = 7,8-dihydrofolate + NADPH + H(+). It participates in cofactor biosynthesis; tetrahydrofolate biosynthesis; 5,6,7,8-tetrahydrofolate from 7,8-dihydrofolate: step 1/1. Key enzyme in folate metabolism. Catalyzes an essential reaction for de novo glycine and purine synthesis, and for DNA precursor synthesis. The chain is Dihydrofolate reductase (folA) from Enterococcus faecium (Streptococcus faecium).